Reading from the N-terminus, the 391-residue chain is Trehalose-phosphate phosphatase (391 aa).

Aspartate 147 functions as the Nucleophile in the catalytic mechanism. 3 residues coordinate Mg(2+): aspartate 147, aspartate 149, and aspartate 330. 147–149 (DFD) serves as a coordination point for substrate.

The protein belongs to the trehalose phosphatase family. Requires Mg(2+) as cofactor.

The catalysed reaction is alpha,alpha-trehalose 6-phosphate + H2O = alpha,alpha-trehalose + phosphate. The protein operates within glycan biosynthesis; trehalose biosynthesis. Functionally, removes the phosphate from trehalose 6-phosphate to produce free trehalose. The chain is Trehalose-phosphate phosphatase (otsB) from Mycobacterium avium (strain 104).